The chain runs to 443 residues: Probable glycine dehydrogenase (decarboxylating) subunit 1 (443 aa).

The protein belongs to the GcvP family. N-terminal subunit subfamily. As to quaternary structure, the glycine cleavage system is composed of four proteins: P, T, L and H. In this organism, the P 'protein' is a heterodimer of two subunits.

It carries out the reaction N(6)-[(R)-lipoyl]-L-lysyl-[glycine-cleavage complex H protein] + glycine + H(+) = N(6)-[(R)-S(8)-aminomethyldihydrolipoyl]-L-lysyl-[glycine-cleavage complex H protein] + CO2. In terms of biological role, the glycine cleavage system catalyzes the degradation of glycine. The P protein binds the alpha-amino group of glycine through its pyridoxal phosphate cofactor; CO(2) is released and the remaining methylamine moiety is then transferred to the lipoamide cofactor of the H protein. The protein is Probable glycine dehydrogenase (decarboxylating) subunit 1 of Nitratidesulfovibrio vulgaris (strain ATCC 29579 / DSM 644 / CCUG 34227 / NCIMB 8303 / VKM B-1760 / Hildenborough) (Desulfovibrio vulgaris).